The sequence spans 380 residues: Guanine nucleotide-binding protein subunit beta (380 aa).

7 WD repeats span residues 64-94 (GHSG…IVWN), 106-136 (LHCP…SIFN), 155-186 (GHKG…VLWD), 203-234 (GHTA…RLWD), 247-277 (GHEG…RLFD), 296-326 (NELP…YVWD), and 342-372 (SHEG…KIWA).

The protein belongs to the WD repeat G protein beta family. G proteins are composed of 3 units, alpha, beta and gamma. Interacts with the gamma subunits RGG1 and RGG2.

It localises to the cell membrane. Functionally, guanine nucleotide-binding proteins (G proteins) are involved as modulators or transducers in various transmembrane signaling systems. The beta and gamma chains are required for the GTPase activity, for replacement of GDP by GTP, and for G protein-effector interaction. This chain is Guanine nucleotide-binding protein subunit beta, found in Oryza sativa subsp. japonica (Rice).